Here is a 150-residue protein sequence, read N- to C-terminus: FAD synthase (150 aa).

Residues 11–12 (TF), 16–19 (HPGH), Asp96, and Tyr124 each bind ATP.

Belongs to the archaeal FAD synthase family. In terms of assembly, homodimer. A divalent metal cation serves as cofactor.

The catalysed reaction is FMN + ATP + H(+) = FAD + diphosphate. The protein operates within cofactor biosynthesis; FAD biosynthesis; FAD from FMN: step 1/1. Functionally, catalyzes the transfer of the AMP portion of ATP to flavin mononucleotide (FMN) to produce flavin adenine dinucleotide (FAD) coenzyme. This is FAD synthase from Methanococcus maripaludis (strain DSM 14266 / JCM 13030 / NBRC 101832 / S2 / LL).